We begin with the raw amino-acid sequence, 123 residues long: UPF0102 protein PputW619_0932 (123 aa).

The protein belongs to the UPF0102 family.

In Pseudomonas putida (strain W619), this protein is UPF0102 protein PputW619_0932.